Reading from the N-terminus, the 487-residue chain is ESCRT-I complex subunit vps23 (487 aa).

An SB domain is found at 428 to 487 (SERELKYYELKRKDEKLDEGIRALNQALHHESIMPASWLKGIKLLARQQFLIRDEMLQYS).

Component of the ESCRT-I complex (endosomal sorting complex required for transport I).

It localises to the cytoplasm. The protein resides in the endosome. It is found in the late endosome membrane. Its function is as follows. Component of the ESCRT-I complex, a regulator of vesicular trafficking process. Binds to ubiquitinated cargo proteins and is required for the sorting of endocytic ubiquitinated cargos into multivesicular bodies (MVBs). Mediates the association to the ESCRT-0 complex. The protein is ESCRT-I complex subunit vps23 (sst6) of Schizosaccharomyces pombe (strain 972 / ATCC 24843) (Fission yeast).